Here is a 353-residue protein sequence, read N- to C-terminus: 2-oxoglutarate-Fe(II) type oxidoreductase ppzD (353 aa).

The 112-residue stretch at 181–292 (NTSELRLNHY…RYSVAYFGKP (112 aa)) folds into the Fe2OG dioxygenase domain. Positions 208, 210, and 268 each coordinate Fe cation. 2-oxoglutarate is bound at residue Arg283.

It belongs to the iron/ascorbate-dependent oxidoreductase family. It depends on Fe(2+) as a cofactor.

It catalyses the reaction L-proline + 2-oxoglutarate + O2 = trans-4-hydroxy-L-proline + succinate + CO2. It carries out the reaction L-proline + 2-oxoglutarate + O2 = trans-3-hydroxy-L-proline + succinate + CO2. The enzyme catalyses D-proline + 2-oxoglutarate + O2 = cis-4-hydroxy-D-proline + succinate + CO2. It functions in the pathway secondary metabolite biosynthesis. In terms of biological role, 2-oxoglutarate-Fe(II) type oxidoreductase; part of the gene cluster that mediates the biosynthesis of pyrrolopyrazines, secondary metabolites showing insecticidal activity. Within the pathway, ppzD converts L-proline into trans-4-hydroxy-L-proline as a major product, yielding a key precursor for peramine biosynthesis. PpzD is also able to convert L-proline into trans-3-hydroxy-L-proline. The single multifunctional NRPS ppzA is sufficient to produce peramine via condensation of 1-pyrroline-5-carboxylate and arginine, N-methylation of the alpha-amino group of arginine and reduction of the thioester and the cyclization to form an iminium ion resulting in release from the peptide synthetase. Deprotonation of this intermediate and oxidation of the pyrroline ring would give rise to peramine. In Epichloe species that produce only peramine, the peramine synthetase gene is not localized in a gene cluster, in contrast to Metarhizium species that contain additional pyrrolopyrazine biosynthesis genes. The 2-oxoglutarate-Fe(II) type oxidoreductase ppzC hydroxylates peramine to yield the newly identified compound 8-hydroxyperamine whereas ppzD converts L-proline into trans-4-hydroxy-L-proline, a precursor of peramine biosynthesis. The sequence is that of 2-oxoglutarate-Fe(II) type oxidoreductase ppzD from Metarhizium rileyi (strain RCEF 4871) (Nomuraea rileyi).